A 238-amino-acid polypeptide reads, in one-letter code: Sugar fermentation stimulation protein homolog (238 aa).

It belongs to the SfsA family.

The chain is Sugar fermentation stimulation protein homolog from Vibrio vulnificus (strain CMCP6).